We begin with the raw amino-acid sequence, 198 residues long: Holliday junction resolvase RecU (198 aa).

A disordered region spans residues 1 to 29 (MIRYPNGKSYQPKTAASSLQKKPSYSNRG). Residues 8 to 29 (KSYQPKTAASSLQKKPSYSNRG) show a composition bias toward polar residues. Residues Thr83, Asp85, Glu98, and Gln117 each contribute to the Mg(2+) site.

Belongs to the RecU family. Mg(2+) is required as a cofactor.

The protein localises to the cytoplasm. It catalyses the reaction Endonucleolytic cleavage at a junction such as a reciprocal single-stranded crossover between two homologous DNA duplexes (Holliday junction).. Functionally, endonuclease that resolves Holliday junction intermediates in genetic recombination. Cleaves mobile four-strand junctions by introducing symmetrical nicks in paired strands. Promotes annealing of linear ssDNA with homologous dsDNA. Required for DNA repair, homologous recombination and chromosome segregation. This chain is Holliday junction resolvase RecU, found in Bacillus licheniformis (strain ATCC 14580 / DSM 13 / JCM 2505 / CCUG 7422 / NBRC 12200 / NCIMB 9375 / NCTC 10341 / NRRL NRS-1264 / Gibson 46).